The following is a 394-amino-acid chain: Phosphopentomutase (394 aa).

Residues Asp13, Asp286, His291, Asp327, His328, and His339 each coordinate Mn(2+).

The protein belongs to the phosphopentomutase family. It depends on Mn(2+) as a cofactor.

The protein localises to the cytoplasm. The catalysed reaction is 2-deoxy-alpha-D-ribose 1-phosphate = 2-deoxy-D-ribose 5-phosphate. It carries out the reaction alpha-D-ribose 1-phosphate = D-ribose 5-phosphate. It functions in the pathway carbohydrate degradation; 2-deoxy-D-ribose 1-phosphate degradation; D-glyceraldehyde 3-phosphate and acetaldehyde from 2-deoxy-alpha-D-ribose 1-phosphate: step 1/2. Its function is as follows. Isomerase that catalyzes the conversion of deoxy-ribose 1-phosphate (dRib-1-P) and ribose 1-phosphate (Rib-1-P) to deoxy-ribose 5-phosphate (dRib-5-P) and ribose 5-phosphate (Rib-5-P), respectively. This Bacillus thuringiensis (strain Al Hakam) protein is Phosphopentomutase.